A 198-amino-acid chain; its full sequence is Host transcription reprogramming factor 1 (198 aa).

The first 19 residues, 1–19 (MQLSNFLSIWALVAMGATA), serve as a signal peptide directing secretion. Disordered stretches follow at residues 21-59 (PMPSGSAPGNPFADGEAYGARPSQGLTPVPKVHDGSYHS) and 71-198 (ERLA…PVQL). The C2H2-type zinc-finger motif lies at 58–81 (HSCETCAAPFRTEERLAAHRQADH). Basic and acidic residues-rich tracts occupy residues 71–80 (ERLAAHRQAD), 104–128 (TSERERLDRLASRVGEDYVEKRSQE), and 167–177 (KLDKPTRKEQY).

The protein localises to the secreted. Its subcellular location is the host nucleus. Its function is as follows. Secreted effector that translocates into the nuclei of host cells to reprogram the expression of immunity-associated genes by binding to effector binding elements (EBEs) in rice. Binds the 5'-CAATCTTC-3' EBE of promoters from targeted rice genes and probably recruits a yet to be determined host repressor. Causes ambivalent immunity with increased susceptibility to the hemibiotrophic pathogens Magnaporthe oryzae and Xanthomonas oryzae pv. oryzae, but enhances resistance to Cochliobolus miyabeanus, a necrotrophic pathogen. The sequence is that of Host transcription reprogramming factor 1 from Pyricularia oryzae (strain 70-15 / ATCC MYA-4617 / FGSC 8958) (Rice blast fungus).